The primary structure comprises 320 residues: MSTTPARLGTRRSTMATNQSRRVAEILTARTGVPVELVLITSFGDITRAHLTQLGGTGVFVSALRDALLAGEVEFAVHSLKDLPTAPTEGIVLAAVTERDDPRDALCARDGLKFADLPPGATVGTGSPRRVAQLAALRPDLRYVPIRGNAETRLGKVASGELDAVVLAYAGLHRVGRLDDVTDVFDVDQVLPAPGQGALAVECRTADFTGPLRYLTAVDHLPTRAAVTAERVILAELEAGCAAPVGAYAEFVAEDRLRLRAAVVATDGSQAVRAEQTVTVTEFPDAVQAATALGRQLAHDMIEQGADQIVADAAAGRGES.

Cys241 carries the post-translational modification S-(dipyrrolylmethanemethyl)cysteine.

This sequence belongs to the HMBS family. As to quaternary structure, monomer. Dipyrromethane is required as a cofactor.

The catalysed reaction is 4 porphobilinogen + H2O = hydroxymethylbilane + 4 NH4(+). Its pathway is porphyrin-containing compound metabolism; protoporphyrin-IX biosynthesis; coproporphyrinogen-III from 5-aminolevulinate: step 2/4. Tetrapolymerization of the monopyrrole PBG into the hydroxymethylbilane pre-uroporphyrinogen in several discrete steps. In Thermobifida fusca (strain YX), this protein is Porphobilinogen deaminase.